The chain runs to 227 residues: Large ribosomal subunit protein uL3 (227 aa).

At Gln-151 the chain carries N5-methylglutamine.

The protein belongs to the universal ribosomal protein uL3 family. Part of the 50S ribosomal subunit. Forms a cluster with proteins L14 and L19. Methylated by PrmB.

One of the primary rRNA binding proteins, it binds directly near the 3'-end of the 23S rRNA, where it nucleates assembly of the 50S subunit. This is Large ribosomal subunit protein uL3 from Gluconacetobacter diazotrophicus (strain ATCC 49037 / DSM 5601 / CCUG 37298 / CIP 103539 / LMG 7603 / PAl5).